We begin with the raw amino-acid sequence, 55 residues long: Large ribosomal subunit protein bL33 (55 aa).

This sequence belongs to the bacterial ribosomal protein bL33 family.

This chain is Large ribosomal subunit protein bL33, found in Deinococcus geothermalis (strain DSM 11300 / CIP 105573 / AG-3a).